The primary structure comprises 1010 residues: DENN domain-containing protein 1A (1010 aa).

Residues Phe-13–Thr-143 enclose the uDENN domain. One can recognise a cDENN domain in the interval Glu-160–Arg-296. The dDENN domain maps to Met-298–Gly-375. The short motif at Phe-378–Phe-382 is the FXDXF motif element. Positions Gly-455–Thr-554 are disordered. A compositionally biased stretch (basic and acidic residues) spans Ile-472–Pro-482. The span at Pro-493–Lys-502 shows a compositional bias: basic residues. The segment covering Ser-509–Arg-524 has biased composition (polar residues). Positions Ser-538–Val-548 are enriched in basic and acidic residues. The Clathrin box signature appears at Ser-560 to Leu-569.

The protein localises to the cytoplasmic vesicle. The protein resides in the clathrin-coated vesicle membrane. Its subcellular location is the presynaptic cell membrane. In terms of biological role, guanine nucleotide exchange factor (GEF) regulating clathrin-mediated endocytosis through RAB35 activation. Promotes the exchange of GDP to GTP, converting inactive GDP-bound RAB35 into its active GTP-bound form. Regulates clathrin-mediated endocytosis of synaptic vesicles and mediates exit from early endosomes. Binds phosphatidylinositol-phosphates (PtdInsPs), with some preference for PtdIns(3)P. The sequence is that of DENN domain-containing protein 1A (dennd1a) from Xenopus laevis (African clawed frog).